A 199-amino-acid chain; its full sequence is Outer-membrane lipoprotein LolB (199 aa).

Positions 1 to 28 (MAAAGSLCQTAWRVRGWLAAGLCALLAG) are cleaved as a signal peptide. Residue C29 is the site of N-palmitoyl cysteine attachment. C29 is lipidated: S-diacylglycerol cysteine.

Belongs to the LolB family. Monomer.

It is found in the cell outer membrane. Functionally, plays a critical role in the incorporation of lipoproteins in the outer membrane after they are released by the LolA protein. This chain is Outer-membrane lipoprotein LolB, found in Bordetella petrii (strain ATCC BAA-461 / DSM 12804 / CCUG 43448).